A 318-amino-acid chain; its full sequence is CRISPR-associated endonuclease Cas1 1 (318 aa).

Residues glutamate 160, histidine 225, and glutamate 240 each contribute to the Mn(2+) site.

It belongs to the CRISPR-associated endonuclease Cas1 family. As to quaternary structure, homodimer, forms a heterotetramer with a Cas2 homodimer. Mg(2+) serves as cofactor. It depends on Mn(2+) as a cofactor.

Its function is as follows. CRISPR (clustered regularly interspaced short palindromic repeat), is an adaptive immune system that provides protection against mobile genetic elements (viruses, transposable elements and conjugative plasmids). CRISPR clusters contain spacers, sequences complementary to antecedent mobile elements, and target invading nucleic acids. CRISPR clusters are transcribed and processed into CRISPR RNA (crRNA). Acts as a dsDNA endonuclease. Involved in the integration of spacer DNA into the CRISPR cassette. The polypeptide is CRISPR-associated endonuclease Cas1 1 (Thermodesulfovibrio yellowstonii (strain ATCC 51303 / DSM 11347 / YP87)).